Consider the following 385-residue polypeptide: 8-amino-7-oxononanoate synthase (385 aa).

Arg21 contacts substrate. Pyridoxal 5'-phosphate is bound at residue 108–109 (GF). Residue His133 coordinates substrate. Residues Ser179, His207, and Thr233 each contribute to the pyridoxal 5'-phosphate site. The residue at position 236 (Lys236) is an N6-(pyridoxal phosphate)lysine. Thr352 contacts substrate.

The protein belongs to the class-II pyridoxal-phosphate-dependent aminotransferase family. BioF subfamily. As to quaternary structure, homodimer. Pyridoxal 5'-phosphate serves as cofactor.

The enzyme catalyses 6-carboxyhexanoyl-[ACP] + L-alanine + H(+) = (8S)-8-amino-7-oxononanoate + holo-[ACP] + CO2. It participates in cofactor biosynthesis; biotin biosynthesis. Catalyzes the decarboxylative condensation of pimeloyl-[acyl-carrier protein] and L-alanine to produce 8-amino-7-oxononanoate (AON), [acyl-carrier protein], and carbon dioxide. In Salmonella paratyphi B (strain ATCC BAA-1250 / SPB7), this protein is 8-amino-7-oxononanoate synthase.